Reading from the N-terminus, the 417-residue chain is NADH-quinone oxidoreductase subunit D (417 aa).

The protein belongs to the complex I 49 kDa subunit family. In terms of assembly, NDH-1 is composed of 14 different subunits. Subunits NuoB, C, D, E, F, and G constitute the peripheral sector of the complex.

The protein resides in the cell inner membrane. It catalyses the reaction a quinone + NADH + 5 H(+)(in) = a quinol + NAD(+) + 4 H(+)(out). In terms of biological role, NDH-1 shuttles electrons from NADH, via FMN and iron-sulfur (Fe-S) centers, to quinones in the respiratory chain. The immediate electron acceptor for the enzyme in this species is believed to be ubiquinone. Couples the redox reaction to proton translocation (for every two electrons transferred, four hydrogen ions are translocated across the cytoplasmic membrane), and thus conserves the redox energy in a proton gradient. The polypeptide is NADH-quinone oxidoreductase subunit D (Paraburkholderia phytofirmans (strain DSM 17436 / LMG 22146 / PsJN) (Burkholderia phytofirmans)).